The primary structure comprises 337 residues: Ketol-acid reductoisomerase (NADP(+)) (337 aa).

Positions 1–180 (MQVYYDKDAD…GGTKGGVIET (180 aa)) constitute a KARI N-terminal Rossmann domain. NADP(+) is bound by residues 24-27 (YGSQ), R47, and S51. The active site involves H106. G132 contributes to the NADP(+) binding site. In terms of domain architecture, KARI C-terminal knotted spans 181-326 (TFREETETDL…ARLRAMMPWI (146 aa)). Residues D189, E193, E225, and E229 each contribute to the Mg(2+) site. S250 contacts substrate.

The protein belongs to the ketol-acid reductoisomerase family. It depends on Mg(2+) as a cofactor.

It catalyses the reaction (2R)-2,3-dihydroxy-3-methylbutanoate + NADP(+) = (2S)-2-acetolactate + NADPH + H(+). The catalysed reaction is (2R,3R)-2,3-dihydroxy-3-methylpentanoate + NADP(+) = (S)-2-ethyl-2-hydroxy-3-oxobutanoate + NADPH + H(+). It participates in amino-acid biosynthesis; L-isoleucine biosynthesis; L-isoleucine from 2-oxobutanoate: step 2/4. Its pathway is amino-acid biosynthesis; L-valine biosynthesis; L-valine from pyruvate: step 2/4. Involved in the biosynthesis of branched-chain amino acids (BCAA). Catalyzes an alkyl-migration followed by a ketol-acid reduction of (S)-2-acetolactate (S2AL) to yield (R)-2,3-dihydroxy-isovalerate. In the isomerase reaction, S2AL is rearranged via a Mg-dependent methyl migration to produce 3-hydroxy-3-methyl-2-ketobutyrate (HMKB). In the reductase reaction, this 2-ketoacid undergoes a metal-dependent reduction by NADPH to yield (R)-2,3-dihydroxy-isovalerate. This is Ketol-acid reductoisomerase (NADP(+)) from Neisseria gonorrhoeae (strain ATCC 700825 / FA 1090).